A 154-amino-acid polypeptide reads, in one-letter code: Myoglobin (154 aa).

One can recognise a Globin domain in the interval 2–148 (GLSDGEWQIV…FRNDIAAKYK (147 aa)). Ser-4 carries the post-translational modification Phosphoserine. Position 65 (His-65) interacts with nitrite. Residue His-65 participates in O2 binding. Thr-68 carries the phosphothreonine modification. His-94 serves as a coordination point for heme b.

This sequence belongs to the globin family. In terms of assembly, monomeric.

It is found in the cytoplasm. The protein localises to the sarcoplasm. The catalysed reaction is Fe(III)-heme b-[protein] + nitric oxide + H2O = Fe(II)-heme b-[protein] + nitrite + 2 H(+). The enzyme catalyses H2O2 + AH2 = A + 2 H2O. Monomeric heme protein which primary function is to store oxygen and facilitate its diffusion within muscle tissues. Reversibly binds oxygen through a pentacoordinated heme iron and enables its timely and efficient release as needed during periods of heightened demand. Depending on the oxidative conditions of tissues and cells, and in addition to its ability to bind oxygen, it also has a nitrite reductase activity whereby it regulates the production of bioactive nitric oxide. Under stress conditions, like hypoxia and anoxia, it also protects cells against reactive oxygen species thanks to its pseudoperoxidase activity. The chain is Myoglobin (MB) from Lycaon pictus (African wild dog).